The sequence spans 270 residues: Probable feruloyl esterase C (270 aa).

The first 21 residues, 1 to 21 (MIKSIILQAIMVLSTLTSVHG), serve as a signal peptide directing secretion. N-linked (GlcNAc...) asparagine glycosylation is present at asparagine 23.

It belongs to the faeC family.

The protein resides in the secreted. The catalysed reaction is feruloyl-polysaccharide + H2O = ferulate + polysaccharide.. In terms of biological role, involved in degradation of plant cell walls. Hydrolyzes the feruloyl-arabinose ester bond in arabinoxylans, and the feruloyl-galactose ester bond in pectin. Active against paranitrophenyl-acetate, methyl ferulate and wheat arabinoxylan. The protein is Probable feruloyl esterase C (faeC) of Aspergillus oryzae (strain ATCC 42149 / RIB 40) (Yellow koji mold).